Reading from the N-terminus, the 206-residue chain is Probable chemoreceptor glutamine deamidase CheD 1 (206 aa).

This sequence belongs to the CheD family.

The enzyme catalyses L-glutaminyl-[protein] + H2O = L-glutamyl-[protein] + NH4(+). Functionally, probably deamidates glutamine residues to glutamate on methyl-accepting chemotaxis receptors (MCPs), playing an important role in chemotaxis. The polypeptide is Probable chemoreceptor glutamine deamidase CheD 1 (Shewanella oneidensis (strain ATCC 700550 / JCM 31522 / CIP 106686 / LMG 19005 / NCIMB 14063 / MR-1)).